We begin with the raw amino-acid sequence, 316 residues long: Acetaldehyde dehydrogenase 1 (316 aa).

Residue 12 to 15 (SGNI) coordinates NAD(+). The active-site Acyl-thioester intermediate is the C132. Residues 163–171 (SAGPGTRAN) and N291 each bind NAD(+).

The protein belongs to the acetaldehyde dehydrogenase family.

The catalysed reaction is acetaldehyde + NAD(+) + CoA = acetyl-CoA + NADH + H(+). The protein is Acetaldehyde dehydrogenase 1 of Pseudomonas putida (strain ATCC 700007 / DSM 6899 / JCM 31910 / BCRC 17059 / LMG 24140 / F1).